The sequence spans 130 residues: B1 protein (130 aa).

The signal sequence occupies residues 1 to 12; the sequence is LTSLILLVAVQA. Disulfide bonds link Cys-28–Cys-59 and Cys-99–Cys-116.

Belongs to the PBP/GOBP family. N-glycosylated. Tubular accessory sex gland.

The protein resides in the secreted. In terms of biological role, may be a carrier protein for lipids. The polypeptide is B1 protein (Tenebrio molitor (Yellow mealworm beetle)).